The following is a 37-amino-acid chain: Large ribosomal subunit protein bL36 (37 aa).

Belongs to the bacterial ribosomal protein bL36 family.

This chain is Large ribosomal subunit protein bL36, found in Listeria innocua serovar 6a (strain ATCC BAA-680 / CLIP 11262).